The sequence spans 257 residues: Pyridoxine 5'-phosphate synthase (257 aa).

Asn6 contributes to the 3-amino-2-oxopropyl phosphate binding site. 8–9 (DH) serves as a coordination point for 1-deoxy-D-xylulose 5-phosphate. Arg17 contacts 3-amino-2-oxopropyl phosphate. His42 functions as the Proton acceptor in the catalytic mechanism. 1-deoxy-D-xylulose 5-phosphate is bound by residues Arg44 and His49. The Proton acceptor role is filled by Glu69. Thr99 contacts 1-deoxy-D-xylulose 5-phosphate. Catalysis depends on His211, which acts as the Proton donor. Residues Gly212 and 233-234 (GQ) each bind 3-amino-2-oxopropyl phosphate.

Belongs to the PNP synthase family. In terms of assembly, homooctamer; tetramer of dimers.

The protein resides in the cytoplasm. The enzyme catalyses 3-amino-2-oxopropyl phosphate + 1-deoxy-D-xylulose 5-phosphate = pyridoxine 5'-phosphate + phosphate + 2 H2O + H(+). It functions in the pathway cofactor biosynthesis; pyridoxine 5'-phosphate biosynthesis; pyridoxine 5'-phosphate from D-erythrose 4-phosphate: step 5/5. In terms of biological role, catalyzes the complicated ring closure reaction between the two acyclic compounds 1-deoxy-D-xylulose-5-phosphate (DXP) and 3-amino-2-oxopropyl phosphate (1-amino-acetone-3-phosphate or AAP) to form pyridoxine 5'-phosphate (PNP) and inorganic phosphate. This Campylobacter hominis (strain ATCC BAA-381 / DSM 21671 / CCUG 45161 / LMG 19568 / NCTC 13146 / CH001A) protein is Pyridoxine 5'-phosphate synthase.